A 311-amino-acid polypeptide reads, in one-letter code: tRNA dimethylallyltransferase (311 aa).

13 to 20 (GPTASGKT) contacts ATP. 15-20 (TASGKT) serves as a coordination point for substrate. 2 interaction with substrate tRNA regions span residues 38 to 41 (DSMQ) and 166 to 170 (QRVLR).

It belongs to the IPP transferase family. Monomer. Requires Mg(2+) as cofactor.

It catalyses the reaction adenosine(37) in tRNA + dimethylallyl diphosphate = N(6)-dimethylallyladenosine(37) in tRNA + diphosphate. Its function is as follows. Catalyzes the transfer of a dimethylallyl group onto the adenine at position 37 in tRNAs that read codons beginning with uridine, leading to the formation of N6-(dimethylallyl)adenosine (i(6)A). This chain is tRNA dimethylallyltransferase, found in Staphylococcus aureus (strain Mu3 / ATCC 700698).